The sequence spans 833 residues: Scavenger receptor class F member 2 (833 aa).

The first 33 residues, 1–33 (MEGAGSRGAGPARRQGARGLGLLLLLWLLPGLA), serve as a signal peptide directing secretion. At 34 to 433 (APQDLNPRGR…ACHLETNQRK (400 aa)) the chain is on the extracellular side. EGF-like domains lie at 63–102 (LGDE…ANCD), 114–145 (CKER…ARCE), 140–174 (WGAR…AQCA), 175–204 (SACY…RSCN), 205–233 (NQCA…ARCD), and 228–262 (FGAR…KYCR). 18 disulfides stabilise this stretch: Cys-67–Cys-78, Cys-72–Cys-90, Cys-92–Cys-101, Cys-118–Cys-126, Cys-120–Cys-133, Cys-135–Cys-144, Cys-148–Cys-155, Cys-150–Cys-162, Cys-164–Cys-173, Cys-177–Cys-185, Cys-179–Cys-192, Cys-194–Cys-203, Cys-207–Cys-214, Cys-209–Cys-221, Cys-223–Cys-232, Cys-236–Cys-243, Cys-238–Cys-250, and Cys-252–Cys-261. N-linked (GlcNAc...) asparagine glycosylation occurs at Asn-75. Residues Asn-302 and Asn-357 are each glycosylated (N-linked (GlcNAc...) asparagine). An EGF-like 7 domain is found at 364–395 (CAFVCSDCGSGHCDFQSGRCLCSPGVHGPHCN). 3 disulfides stabilise this stretch: Cys-368/Cys-376, Cys-371/Cys-383, and Cys-385/Cys-394. Asn-395 is a glycosylation site (N-linked (GlcNAc...) asparagine). Residues 434-454 (GVMGAGALLTLLLGLLLSLLG) form a helical membrane-spanning segment. Residues 455 to 833 (CCCACRGKDS…SRAGTAPGAS (379 aa)) lie on the Cytoplasmic side of the membrane. 2 positions are modified to phosphoserine: Ser-538 and Ser-600. Residues 578 to 833 (SLEPTGTSTP…SRAGTAPGAS (256 aa)) are disordered. Tyr-615 is subject to Phosphotyrosine. The segment covering 619–630 (ARREARPARTRN) has biased composition (basic and acidic residues). Ser-638, Ser-640, and Ser-695 each carry phosphoserine. Thr-712 is subject to Phosphothreonine. Residues 748 to 761 (ELRDKTRSLGRAEK) are compositionally biased toward basic and acidic residues. Residues 781 to 798 (ASASEASGSEKAAASAPA) show a composition bias toward low complexity. Over residues 804–816 (KKTPIQKPPRKKS) the composition is skewed to basic residues.

Homophilic and heterophilic interaction via its extracellular domain. Interacts with SCARF1. The heterophilic interaction with SCARF1, which is stronger than the homophilic interaction with itself, is suppressed by the presence of SCARF1 ligand such as Ac-LDL.

The protein localises to the membrane. Probable adhesion protein, which mediates homophilic and heterophilic interactions. In contrast to SCARF1, it poorly mediates the binding and degradation of acetylated low density lipoprotein (Ac-LDL). The protein is Scavenger receptor class F member 2 (Scarf2) of Mus musculus (Mouse).